We begin with the raw amino-acid sequence, 202 residues long: Imidazoleglycerol-phosphate dehydratase (202 aa).

The protein belongs to the imidazoleglycerol-phosphate dehydratase family.

Its subcellular location is the cytoplasm. The catalysed reaction is D-erythro-1-(imidazol-4-yl)glycerol 3-phosphate = 3-(imidazol-4-yl)-2-oxopropyl phosphate + H2O. It participates in amino-acid biosynthesis; L-histidine biosynthesis; L-histidine from 5-phospho-alpha-D-ribose 1-diphosphate: step 6/9. The protein is Imidazoleglycerol-phosphate dehydratase of Synechococcus sp. (strain WH7803).